The primary structure comprises 83 residues: Mu-theraphotoxin-Hhn2j 4 (83 aa).

The first 21 residues, 1–21, serve as a signal peptide directing secretion; sequence MKASMFLALAGLVLLFVVGYA. Residues 22 to 48 constitute a propeptide that is removed on maturation; that stretch reads SESEEKEFPIELLSKIFAVDVFKGEGR. 3 cysteine pairs are disulfide-bonded: cysteine 50–cysteine 65, cysteine 57–cysteine 70, and cysteine 64–cysteine 77. Position 81 is a leucine amide (leucine 81).

Belongs to the neurotoxin 10 (Hwtx-1) family. 15 (Hntx-3) subfamily. As to quaternary structure, monomer. In terms of tissue distribution, expressed by the venom gland.

The protein localises to the secreted. Functionally, lethal neurotoxin. Selectively blocks tetrodotoxin-sensitive voltage-gated sodium channels (Nav). Does not affect tetrodotoxin-resistant voltage-gated sodium channels or calcium channels. The protein is Mu-theraphotoxin-Hhn2j 4 of Cyriopagopus hainanus (Chinese bird spider).